The primary structure comprises 129 residues: Prefoldin subunit 6 (129 aa).

Position 2 is an N-acetylalanine (Ala2). The residue at position 21 (Lys21) is an N6-acetyllysine. Residue Lys66 is modified to N6-acetyllysine; alternate. Lys66 participates in a covalent cross-link: Glycyl lysine isopeptide (Lys-Gly) (interchain with G-Cter in SUMO1); alternate. A Glycyl lysine isopeptide (Lys-Gly) (interchain with G-Cter in SUMO2); alternate cross-link involves residue Lys66.

This sequence belongs to the prefoldin subunit beta family. In terms of assembly, heterohexamer of two PFD-alpha type and four PFD-beta type subunits. Component of the PAQosome complex which is responsible for the biogenesis of several protein complexes and which consists of R2TP complex members RUVBL1, RUVBL2, RPAP3 and PIH1D1, URI complex members PFDN2, PFDN6, PDRG1, UXT and URI1 as well as ASDURF, POLR2E and DNAAF10/WDR92.

Functionally, binds specifically to cytosolic chaperonin (c-CPN) and transfers target proteins to it. Binds to nascent polypeptide chain and promotes folding in an environment in which there are many competing pathways for nonnative proteins. This Bos taurus (Bovine) protein is Prefoldin subunit 6 (PFDN6).